The chain runs to 804 residues: Endoplasmin (804 aa).

The N-terminal stretch at 1-21 is a signal peptide; it reads MRVLWVLGLCCVLLTFGFVRA. The short motif at 42–44 is the SRT pseudosubstrate motif element; it reads SRT. N-linked (GlcNAc...) asparagine glycosylation is present at N62. S64 carries the phosphoserine modification. Residue N107 is glycosylated (N-linked (GlcNAc...) asparagine). Residues N107, D149, and N162 each coordinate ATP. K168 carries the post-translational modification N6-(2-hydroxyisobutyryl)lysine. Phosphoserine is present on S172. F199 contributes to the ATP binding site. The N-linked (GlcNAc...) asparagine glycan is linked to N217. Residues 288-323 form a disordered region; that stretch reads TVEEPLEEDETAQEEKEEADDEAAVEEEEEEKKPKT. Positions 289–317 are enriched in acidic residues; the sequence is VEEPLEEDETAQEEKEEADDEAAVEEEEE. At S403 the chain carries Phosphoserine. The residue at position 404 (K404) is an N6-succinyllysine. N-linked (GlcNAc...) asparagine glycosylation occurs at N445. Position 447 is a phosphoserine (S447). K479 bears the N6-acetyllysine mark. 2 N-linked (GlcNAc...) asparagine glycosylation sites follow: N481 and N502. At K633 the chain carries N6-succinyllysine. A disordered region spans residues 749–804; sequence IDPEAQVEEEPEEEPEDTTEDTTDDSEQDEEETDAGAEEEEEEQETEKEPTEKDEL. Residues 753–794 are compositionally biased toward acidic residues; that stretch reads AQVEEEPEEEPEDTTEDTTDDSEQDEEETDAGAEEEEEEQET. Residues 795–804 show a composition bias toward basic and acidic residues; it reads EKEPTEKDEL. The Prevents secretion from ER motif lies at 801-804; the sequence is KDEL.

Belongs to the heat shock protein 90 family. As to quaternary structure, homodimer; disulfide-linked. Component of an EIF2 complex at least composed of CELF1/CUGBP1, CALR, CALR3, EIF2S1, EIF2S2, HSP90B1 and HSPA5. Part of a large chaperone multiprotein complex comprising DNAJB11, HSP90B1, HSPA5, HYOU, PDIA2, PDIA4, PDIA6, PPIB, SDF2L1, UGGT1 and very small amounts of ERP29, but not, or at very low levels, CALR nor CANX. Interacts with AIMP1; regulates its retention in the endoplasmic reticulum. Hyperglycosylated form interacts with OS9; promoting its degradation by the endoplasmic reticulum associated degradation (ERAD). Interacts with CNPY3. This interaction is disrupted in the presence of ATP. Interacts with TLR4 and TLR9, but not with TLR3. Interacts with MZB1 in a calcium-dependent manner. Interacts with METTL23. Interacts with IL1B; the interaction facilitates cargo translocation into the ERGIC. Interacts with EIF2AK3. Phosphorylated by CK2. In terms of processing, N-glycosylated cotranslationally at Asn-217 by STT3A-containing OST-A complex: this glycosylation is constitutive. In response to various stress, 5 additional facultative sites (Asn-62, Asn-107, Asn-445, Asn-481 and Asn-502) can be glycosylated post-translationally by STT3B-containing OST-B complex, leading to a hyperglycosylated form that is degraded by the ER-associated degradation (ERAD) pathway. In normal conditions, the OST-A complex together with CCDC134 prevent glycosylation at facultative sites during protein folding, thereby preventing hyperglycosylation. Mechanistically, nascent HSP90B1 is tethered during translation to a specialized CCDC134-containing translocon that forms a microenvironment for its folding, in which STT3A associates with the SRT pseudosubstrate motif, and prevents access to facultative glycosylation sites until folding is completed, rendering its facultative sites inaccessible to the OST-B complex.

The protein localises to the endoplasmic reticulum lumen. It is found in the sarcoplasmic reticulum lumen. The protein resides in the melanosome. The enzyme catalyses ATP + H2O = ADP + phosphate + H(+). In terms of biological role, ATP-dependent chaperone involved in the processing of proteins in the endoplasmic reticulum, regulating their transport. Together with MESD, acts as a modulator of the Wnt pathway by promoting the folding of LRP6, a coreceptor of the canonical Wnt pathway. When associated with CNPY3, required for proper folding of Toll-like receptors. Promotes folding and trafficking of TLR4 to the cell surface. May participate in the unfolding of cytosolic leaderless cargos (lacking the secretion signal sequence) such as the interleukin 1/IL-1 to facilitate their translocation into the ERGIC (endoplasmic reticulum-Golgi intermediate compartment) and secretion; the translocation process is mediated by the cargo receptor TMED10. The protein is Endoplasmin of Rattus norvegicus (Rat).